We begin with the raw amino-acid sequence, 625 residues long: FMRFamide-activated amiloride-sensitive sodium channel (625 aa).

Residues 1–67 are Cytoplasmic-facing; that stretch reads MKYTSAATKP…IVTSRDTKRK (67 aa). Residues 68–89 traverse the membrane as a helical segment; sequence VIWALLVIAGFTAATLQLSLLV. The Extracellular segment spans residues 90–536; sequence RKYLQFQVVE…LADLFADIGG (447 aa). 7 N-linked (GlcNAc...) asparagine glycosylation sites follow: Asn-134, Asn-196, Asn-303, Asn-349, Asn-365, Asn-372, and Asn-473. The helical transmembrane segment at 537 to 557 threads the bilayer; sequence TLGLWMGISVLTIMELIELVI. The Cytoplasmic segment spans residues 558–625; that stretch reads RLTGLVFNSE…DFRRGVESPV (68 aa). The tract at residues 570 to 591 is disordered; sequence LPRGPTTVNNNNGSNNHSQSTS. Residues 575 to 591 show a composition bias toward low complexity; that stretch reads TTVNNNNGSNNHSQSTS.

The protein belongs to the amiloride-sensitive sodium channel (TC 1.A.6) family. Muscle and nervous tissue.

The protein localises to the membrane. FMRFamide-gated ionotropic receptor. The chain is FMRFamide-activated amiloride-sensitive sodium channel from Cornu aspersum (Brown garden snail).